A 210-amino-acid chain; its full sequence is Regulator of G-protein signaling 17 (210 aa).

The interval 1 to 21 is disordered; the sequence is MRKRQQSQNEGTSAVSQAPGN. An RGS domain is found at 84–200; it reads NFDKMMKTPA…LNSQIYKSLV (117 aa).

In terms of assembly, interacts with GNAI1 and GNAQ. Interacts with GNAZ and GNAI2. Forms a complex with mu-opioid receptors and G(alpha)z/i2 subunits, including GNAZ and GNAI2; the formation of this complex results in mu-opioid receptor desensitization. Post-translationally, N- and O-glycosylated in synapsomal membranes. In terms of processing, serine phosphorylated in synapsomal membranes. Sumoylated with SUMO1 and SUM02 in synaptosomes. The sumoylated forms act as a scaffold for sequestering mu-opioid receptor-activated G(alpha) subunits.

Its subcellular location is the membrane. The protein localises to the synapse. The protein resides in the synaptosome. It localises to the nucleus. It is found in the cytoplasm. Its function is as follows. Regulates G protein-coupled receptor signaling cascades, including signaling via muscarinic acetylcholine receptor CHRM2 and dopamine receptor DRD2. Inhibits signal transduction by increasing the GTPase activity of G protein alpha subunits, thereby driving them into their inactive GDP-bound form. Binds selectively to GNAZ and GNAI2 subunits, accelerates their GTPase activity and regulates their signaling activities. Negatively regulates mu-opioid receptor-mediated activation of the G-proteins. This Gallus gallus (Chicken) protein is Regulator of G-protein signaling 17 (RGS17).